We begin with the raw amino-acid sequence, 547 residues long: Inositol 1,4,5-trisphosphate receptor-interacting protein-like 1 (547 aa).

The signal sequence occupies residues 1 to 22; the sequence is MAVISLMFLAVMYVVHHPLMVS. Residues 23 to 96 are Extracellular-facing; that stretch reads DRMDLDTLAR…PFQAGGQDGG (74 aa). Positions 28-66 form a coiled coil; it reads DTLARSRQLEKRMSEEMRQLEMEFEERSRAAEQKQKVEN. Residues 97 to 117 form a helical membrane-spanning segment; that stretch reads PLGWILGNLWNAGLFCLFLIF. The Cytoplasmic segment spans residues 118 to 547; the sequence is ELLRQSMQHE…LPCSPVAGGL (430 aa).

It belongs to the ITPRIP family.

The protein localises to the cell membrane. In terms of biological role, functions as a ligand of CD3E, inhibiting TCR-CD3 complex signaling to regulate T cell activation. Induces stable CD3E-NCK1 binding, thereby preventing the CD3E-ZAP70 interaction and subsequently inhibiting the activation of the downstream ERK-NFkB signaling cascade and calcium influx. This chain is Inositol 1,4,5-trisphosphate receptor-interacting protein-like 1 (Itpripl1), found in Mus musculus (Mouse).